The sequence spans 285 residues: Pantothenate synthetase (285 aa).

30–37 (MGNLHAGH) provides a ligand contact to ATP. The active-site Proton donor is the His-37. A (R)-pantoate-binding site is contributed by Gln-61. A beta-alanine-binding site is contributed by Gln-61. An ATP-binding site is contributed by 149–152 (GEKD). Gln-155 is a (R)-pantoate binding site. 186 to 189 (LSSR) provides a ligand contact to ATP.

This sequence belongs to the pantothenate synthetase family. Homodimer.

The protein localises to the cytoplasm. The enzyme catalyses (R)-pantoate + beta-alanine + ATP = (R)-pantothenate + AMP + diphosphate + H(+). Its pathway is cofactor biosynthesis; (R)-pantothenate biosynthesis; (R)-pantothenate from (R)-pantoate and beta-alanine: step 1/1. Its function is as follows. Catalyzes the condensation of pantoate with beta-alanine in an ATP-dependent reaction via a pantoyl-adenylate intermediate. This Ectopseudomonas mendocina (strain ymp) (Pseudomonas mendocina) protein is Pantothenate synthetase.